Consider the following 525-residue polypeptide: MPDAPRPPRPEGLHEQTIARLNNLDAQVDAGFEAYPYSYPQTHHARDVFAAHPAREEGTGEGGTLEPGQKWEEESYSLAGRVTLMRHMGKAAFADLSDEDGKIQLFFSKQDTAGFDATKKIDLGDIIGVKGHPFVTKTGQLTLHVTEWQPLVKSLHPLPSKFHGLQDEELRARRRYVDLMVTEGAREKFQARSRMIRYIRNELDERGFMEVEGPTLQVTAGGAEARPFMTHHNALSYDFKLRISLELYLKRLLVGGFERVYEIGRVYRNEGIDRTHNPEFTMLELYWAYADYSDIAKLVEDLLSGLAKEVHGSYQFEYQGKTLDFTPPFARVDYLGGLREHVPGLDFDPLDLDRLRAFCDERFPQWKGVPSYKLLDKLFGEFVEPLLSNPTFVMDHPAVISPLAKKHRSRPEAVTERFEVFCSGFELANAFSELNDAFDQRERFEAQTARQAAGDDEAHPQDEDFLLALEYGMPPAGGLGIGIDRLAMLLTDSDSIRDVLLFPLLRPEGGEAEEADDTAQENTAG.

Residues E419 and E426 each contribute to the Mg(2+) site.

The protein belongs to the class-II aminoacyl-tRNA synthetase family. Homodimer. Mg(2+) is required as a cofactor.

The protein localises to the cytoplasm. It carries out the reaction tRNA(Lys) + L-lysine + ATP = L-lysyl-tRNA(Lys) + AMP + diphosphate. The sequence is that of Lysine--tRNA ligase (lysS) from Deinococcus radiodurans (strain ATCC 13939 / DSM 20539 / JCM 16871 / CCUG 27074 / LMG 4051 / NBRC 15346 / NCIMB 9279 / VKM B-1422 / R1).